The primary structure comprises 314 residues: Thymidylate synthase (314 aa).

DUMP contacts are provided by residues Arg21 and 176–177 (RR). Catalysis depends on Cys196, which acts as the Nucleophile. DUMP contacts are provided by residues 216–219 (RSAD), Asn227, and 257–259 (HLY). Position 219 (Asp219) interacts with (6R)-5,10-methylene-5,6,7,8-tetrahydrofolate. Ser313 lines the (6R)-5,10-methylene-5,6,7,8-tetrahydrofolate pocket.

It belongs to the thymidylate synthase family. Bacterial-type ThyA subfamily. As to quaternary structure, homodimer.

It is found in the cytoplasm. It catalyses the reaction dUMP + (6R)-5,10-methylene-5,6,7,8-tetrahydrofolate = 7,8-dihydrofolate + dTMP. Its pathway is pyrimidine metabolism; dTTP biosynthesis. Its function is as follows. Catalyzes the reductive methylation of 2'-deoxyuridine-5'-monophosphate (dUMP) to 2'-deoxythymidine-5'-monophosphate (dTMP) while utilizing 5,10-methylenetetrahydrofolate (mTHF) as the methyl donor and reductant in the reaction, yielding dihydrofolate (DHF) as a by-product. This enzymatic reaction provides an intracellular de novo source of dTMP, an essential precursor for DNA biosynthesis. The sequence is that of Thymidylate synthase from Listeria monocytogenes serovar 1/2a (strain ATCC BAA-679 / EGD-e).